A 906-amino-acid chain; its full sequence is Protein translocase subunit SecA (906 aa).

ATP contacts are provided by residues glutamine 86, glycine 104–threonine 108, and aspartate 511. 2 stretches are compositionally biased toward basic and acidic residues: residues histidine 853–glutamate 865 and valine 877–aspartate 888. A disordered region spans residues histidine 853–glutamate 906. Zn(2+)-binding residues include cysteine 890, cysteine 892, cysteine 901, and histidine 902. Residues lysine 896–glutamate 906 are compositionally biased toward basic residues.

Belongs to the SecA family. In terms of assembly, monomer and homodimer. Part of the essential Sec protein translocation apparatus which comprises SecA, SecYEG and auxiliary proteins SecDF-YajC and YidC. Zn(2+) is required as a cofactor.

It localises to the cell inner membrane. Its subcellular location is the cytoplasm. The catalysed reaction is ATP + H2O + cellular proteinSide 1 = ADP + phosphate + cellular proteinSide 2.. Functionally, part of the Sec protein translocase complex. Interacts with the SecYEG preprotein conducting channel. Has a central role in coupling the hydrolysis of ATP to the transfer of proteins into and across the cell membrane, serving both as a receptor for the preprotein-SecB complex and as an ATP-driven molecular motor driving the stepwise translocation of polypeptide chains across the membrane. The chain is Protein translocase subunit SecA from Francisella tularensis subsp. mediasiatica (strain FSC147).